Here is a 170-residue protein sequence, read N- to C-terminus: Adenine phosphoribosyltransferase (170 aa).

Belongs to the purine/pyrimidine phosphoribosyltransferase family. As to quaternary structure, homodimer.

The protein localises to the cytoplasm. It carries out the reaction AMP + diphosphate = 5-phospho-alpha-D-ribose 1-diphosphate + adenine. It functions in the pathway purine metabolism; AMP biosynthesis via salvage pathway; AMP from adenine: step 1/1. Catalyzes a salvage reaction resulting in the formation of AMP, that is energically less costly than de novo synthesis. The sequence is that of Adenine phosphoribosyltransferase from Fervidobacterium nodosum (strain ATCC 35602 / DSM 5306 / Rt17-B1).